A 496-amino-acid chain; its full sequence is 1-aminocyclopropane-1-carboxylate synthase 2 (496 aa).

Substrate contacts are provided by Glu-55 and Tyr-93. At Lys-279 the chain carries N6-(pyridoxal phosphate)lysine. 3 positions are modified to phosphoserine: Ser-483, Ser-488, and Ser-491.

It belongs to the class-I pyridoxal-phosphate-dependent aminotransferase family. As to quaternary structure, homodimer and heterodimer. In vivo, the relevance of heterodimerization with other ACS enzymes is however unsure. Interacts with GRF3. The cofactor is pyridoxal 5'-phosphate. Phosphorylated on serine residue by MAP kinase (MPK6). In terms of processing, may be processed at its C-terminus. High in developing leaves and in flowers. Expressed in roots and siliques.

The catalysed reaction is S-adenosyl-L-methionine = 1-aminocyclopropane-1-carboxylate + S-methyl-5'-thioadenosine + H(+). Its pathway is alkene biosynthesis; ethylene biosynthesis via S-adenosyl-L-methionine; ethylene from S-adenosyl-L-methionine: step 1/2. In terms of biological role, 1-aminocyclopropane-1-carboxylate synthase (ACS) enzymes catalyze the conversion of S-adenosyl-L-methionine (SAM) into 1-aminocyclopropane-1-carboxylate (ACC), a direct precursor of ethylene. The sequence is that of 1-aminocyclopropane-1-carboxylate synthase 2 (ACS2) from Arabidopsis thaliana (Mouse-ear cress).